We begin with the raw amino-acid sequence, 276 residues long: Krueppel homolog 2 (276 aa).

The disordered stretch occupies residues 1–37; sequence MSAPTDQPPRSEGAQTNSSERSSQQQEQPQQSQSQNV. Residues 18–35 are compositionally biased toward low complexity; the sequence is SSERSSQQQEQPQQSQSQ. Ser22 carries the post-translational modification Phosphoserine. Transmembrane regions (helical) follow at residues 53–73, 125–145, and 181–201; these read ALWA…LPIF, LIFF…LYSV, and ILKA…VLAF.

It belongs to the PER33/POM33 family.

It is found in the membrane. Member of the dosage-dependent hierarchy effective upon white gene expression. The protein is Krueppel homolog 2 (Kr-h2) of Drosophila melanogaster (Fruit fly).